Here is a 158-residue protein sequence, read N- to C-terminus: Serglycin (158 aa).

A signal peptide spans 1 to 27 (MMQKLLKCSRLVLALALILVLESSVQG). An intrachain disulfide couples Cys-40 to Cys-49. O-linked (Xyl...) (glycosaminoglycan) serine glycosylation is found at Ser-94 and Ser-96. A run of 9 repeats spans residues 94 to 95 (SG), 96 to 97 (SG), 98 to 99 (FG), 100 to 101 (SG), 102 to 103 (SG), 104 to 105 (SG), 106 to 107 (SG), 108 to 109 (SG), and 110 to 111 (SG). Residues 94-111 (SGSGFGSGSGSGSGSGSG) are 9 X 2 AA tandem repeats of [SF]-G. 6 O-linked (Xyl...) (glycosaminoglycan) serine glycosylation sites follow: Ser-100, Ser-102, Ser-104, Ser-106, Ser-108, and Ser-110. The disordered stretch occupies residues 134 to 158 (RSLDRNLPSDSQDLGQHGLEEDFML).

It belongs to the serglycin family. As to quaternary structure, binds to activated CD44 and to GZMB. In terms of processing, O-glycosylated; contains chondroitin sulfate and heparan sulfate.

Its subcellular location is the cytoplasmic granule. It is found in the cytolytic granule. The protein localises to the secreted. The protein resides in the extracellular space. It localises to the golgi apparatus. Plays a role in formation of mast cell secretory granules and mediates storage of various compounds in secretory vesicles. Required for storage of some proteases in both connective tissue and mucosal mast cells and for storage of granzyme B in T-lymphocytes. Plays a role in localizing neutrophil elastase in azurophil granules of neutrophils. Mediates processing of MMP2. Plays a role in cytotoxic cell granule-mediated apoptosis by forming a complex with granzyme B which is delivered to cells by perforin to induce apoptosis. Regulates the secretion of TNF-alpha and may also regulate protease secretion. Inhibits bone mineralization. The chain is Serglycin (SRGN) from Homo sapiens (Human).